The primary structure comprises 256 residues: UstYa family oxidase phomYc (256 aa).

Residues Leu38 to Gly58 traverse the membrane as a helical segment. N-linked (GlcNAc...) asparagine glycans are attached at residues Asn64 and Asn132. Positions His158 to Cys162 match the HXXHC 1 motif. Asn179 carries N-linked (GlcNAc...) asparagine glycosylation. The HXXHC 2 motif lies at His193–Cys197.

The protein belongs to the ustYa family.

Its subcellular location is the membrane. Its pathway is mycotoxin biosynthesis. Functionally, ustYa family oxidase; part of the gene cluster that mediates the biosynthesis of the phomopsins, a group of hexapeptide mycotoxins which infects lupins and causes lupinosis disease in livestock. Within the pathway, phomYc catalyzes the desaturation of the Ile moiety into 2,3-dehydroisoleucine (dIle). The pathway starts with the processing of the precursor phomA by several endopeptidases including kexin proteases as well as the cluster-specific S41 family peptidase phomP1 and the oligopeptidase phomG to produce 10 identical copies of the hexapeptide Tyr-Val-Ile-Pro-Ile-Asp. After being excised from the precursor peptide, the core peptides are cyclized and modified post-translationally by enzymes encoded within the gene cluster. The timing and order of proteolysis of the phomA precursor and PTMs are still unknown. Two tyrosinase-like enzymes, phomQ1 and phomQ2, catalyze the chlorination and hydroxylation of Tyr, respectively. PhomYb, is proposed to be involved in the construction of the macrocyclic structure. The other 4 ustYa family proteins may be involved in PTMs that generate the unique structure of phomopsin A. PhomYa is required for the hydroxylation of C-beta of Tyr. PhomYc, phomYd, and phomYe are responsible for the biosynthesis of 2,3-dehydroisoleucine (dIle), 2,3-dehydroaspartic acid (dAsp), and 3,4-dehydroproline (dPro), respectively. While dIle formation by phomYc is indispensable for the installation of dAsp by phomYd, the order of the other PTMs have not been elucidated yet. Most of the biosynthetic enzymes likely have broad substrate specificity, and thus, there might be a metabolic grid from a precursor to phomopsin A. The enzyme(s) responsible for the biosynthesis of 3,4-dehydrovaline (dVal) have also not been identified yet. Finally, phomM acts as an S-adenosylmethionine-dependent alpha-N-methyltransferase that catalyzes two successive N-methylation reactions, converting N-desmethyl-phomopsin A to phomopsin A and phomopsin A further to an N,N-dimethylated congener called phomopsin E. In Diaporthe leptostromiformis (Lupinosis disease fungus), this protein is UstYa family oxidase phomYc.